Here is a 318-residue protein sequence, read N- to C-terminus: N-succinylornithine carbamoyltransferase (318 aa).

Carbamoyl phosphate-binding positions include Ser47 to Thr50, Trp75, and Arg110. Position 142 (Glu142) interacts with N(2)-succinyl-L-ornithine. Residue His147–Gln150 participates in carbamoyl phosphate binding. Positions 176 and 236 each coordinate N(2)-succinyl-L-ornithine. Cys274–Leu275 provides a ligand contact to carbamoyl phosphate. Residue Arg278 participates in N(2)-succinyl-L-ornithine binding. A carbamoyl phosphate-binding site is contributed by Arg302.

It belongs to the aspartate/ornithine carbamoyltransferase superfamily. SOTCase family. Homotrimer.

It catalyses the reaction N(2)-succinyl-L-ornithine + carbamoyl phosphate = N(2)-succinyl-L-citrulline + phosphate + H(+). It participates in amino-acid biosynthesis; L-arginine biosynthesis. In terms of biological role, catalyzes the transfer of the carbamoyl group from carbamoyl phosphate to the delta-amino group of N(2)-succinyl-L-ornithine to produce N(2)-succinyl-L-citrulline. Is essential for arginine biosynthesis. Has no activity with either L-ornithine or L-aspartate as substrate. Also has no detectable AOTCase activity, being unable to convert N(2)-acetyl-L-ornithine to N(2)-acetyl-L-citrulline. In Bacteroides fragilis (strain 638R), this protein is N-succinylornithine carbamoyltransferase.